The primary structure comprises 282 residues: HTH-type transcriptional activator RhaR (282 aa).

Residues 179-277 form the HTH araC/xylS-type domain; sequence DKLITRLAAS…GMTPSQWRHL (99 aa). 2 DNA-binding regions (H-T-H motif) span residues 196–217 and 244–267; these read DKFC…RQQT and ISDI…TRET.

Binds DNA as a dimer.

Its subcellular location is the cytoplasm. Activates expression of the rhaSR operon in response to L-rhamnose. The protein is HTH-type transcriptional activator RhaR of Escherichia coli (strain K12 / MC4100 / BW2952).